The chain runs to 258 residues: Large ribosomal subunit protein uL3 (258 aa).

It belongs to the universal ribosomal protein uL3 family. Part of the 50S ribosomal subunit. Forms a cluster with proteins L14 and L19.

Its function is as follows. One of the primary rRNA binding proteins, it binds directly near the 3'-end of the 23S rRNA, where it nucleates assembly of the 50S subunit. The protein is Large ribosomal subunit protein uL3 of Spiroplasma kunkelii.